The primary structure comprises 446 residues: ATP synthase subunit b-delta (446 aa).

The ATP synthase subunit b stretch occupies residues 1 to 168; sequence MSTFIGQLVG…PKGADVEYPL (168 aa). The helical transmembrane segment at 4–24 threads the bilayer; that stretch reads FIGQLVGFAAIVYLVWWYVVP. The ATP synthase subunit delta stretch occupies residues 169–446; sequence LAKMRSASRR…LVAAEAALPD (278 aa).

This sequence in the N-terminal section; belongs to the ATPase B chain family. It in the C-terminal section; belongs to the ATPase delta chain family. As to quaternary structure, F-type ATPases have 2 components, F(1) - the catalytic core - and F(0) - the membrane proton channel. F(1) has five subunits: alpha(3), beta(3), gamma(1), delta(1), epsilon(1). F(0) has three main subunits: a(1), b(2) and c(10-14). The alpha and beta chains form an alternating ring which encloses part of the gamma chain. F(1) is attached to F(0) by a central stalk formed by the gamma and epsilon chains, while a peripheral stalk is formed by the delta and b chains.

It localises to the cell membrane. In terms of biological role, f(1)F(0) ATP synthase produces ATP from ADP in the presence of a proton or sodium gradient. F-type ATPases consist of two structural domains, F(1) containing the extramembraneous catalytic core and F(0) containing the membrane proton channel, linked together by a central stalk and a peripheral stalk. During catalysis, ATP synthesis in the catalytic domain of F(1) is coupled via a rotary mechanism of the central stalk subunits to proton translocation. This fusion protein includes a component of the F(0) channel (subunit b) and of the F(1) subunit (subunit delta). Two copies of subunit b and one of delta together form the peripheral 'stator' stalk which links F(1) to F(0). The chain is ATP synthase subunit b-delta (atpFH) from Mycobacterium leprae (strain Br4923).